Here is a 465-residue protein sequence, read N- to C-terminus: tRNA-2-methylthio-N(6)-dimethylallyladenosine synthase (465 aa).

The region spanning Met26–Arg141 is the MTTase N-terminal domain. Residues Cys35, Cys71, Cys104, Cys173, Cys177, and Cys180 each contribute to the [4Fe-4S] cluster site. Positions Pro159 to Arg388 constitute a Radical SAM core domain. The TRAM domain maps to Leu391 to Gly453.

This sequence belongs to the methylthiotransferase family. MiaB subfamily. Monomer. Requires [4Fe-4S] cluster as cofactor.

The protein resides in the cytoplasm. The catalysed reaction is N(6)-dimethylallyladenosine(37) in tRNA + (sulfur carrier)-SH + AH2 + 2 S-adenosyl-L-methionine = 2-methylsulfanyl-N(6)-dimethylallyladenosine(37) in tRNA + (sulfur carrier)-H + 5'-deoxyadenosine + L-methionine + A + S-adenosyl-L-homocysteine + 2 H(+). Its function is as follows. Catalyzes the methylthiolation of N6-(dimethylallyl)adenosine (i(6)A), leading to the formation of 2-methylthio-N6-(dimethylallyl)adenosine (ms(2)i(6)A) at position 37 in tRNAs that read codons beginning with uridine. In Thermus thermophilus (strain ATCC 27634 / DSM 579 / HB8), this protein is tRNA-2-methylthio-N(6)-dimethylallyladenosine synthase.